A 1452-amino-acid polypeptide reads, in one-letter code: MRTLGTCLVTLAGLLLTAAGETFSGGCLFDEPYSTCGYSQADEDDFNWEQVNTLTKPTSDPWMPSGSFMLVNTSGKPEGQRAHLLLPQLKENDTHCIDFHYFVSSKSNAAPGLLNVYVKVNNGPLGNPIWNISGDPTRTWHRAELAISTFWPNFYQVIFEVVTSGHQGYLAIDEVKVLGHPCTRTPHFLRIQNVEVNAGQFATFQCSAIGRTVAGDRLWLQGIDVRDAPLKEIKVTSSRRFIASFNVVNTTKRDAGKYRCMICTEGGVGISNYAELVVKEPPVPIAPPQLASVGATYLWIQLNANSINGDGPIVAREVEYCTASGSWNDRQPVDSTSYKIGHLDPDTEYEISVLLTRPGEGGTGSPGPALRTRTKCADPMRGPRKLEVVEVKSRQITIRWEPFGYNVTRCHSYNLTVHYGYQVGGQEQVREEVSWDTDNSHPQHTITNLSPYTNVSVKLILMNPEGRKESQELTVQTDEDLPGAVPTESIQGSAFEEKIFLQWREPTQTYGVITLYEITYKAVSSFDPEIDLSNQSGRVSKLGNETHFLFFGLYPGTTYSFTIRASTAKGFGPPATNQFTTKISAPSMPAYEFETPLNQTDNTVTVMLKPAQSRGAPVSVYQIVVEEERPRRTKKTTEILKCYPVPIHFQNASILNSQYYFAAEFPADSLQAAQPFTIGDNKTYNGYWNTPLLPHKSYRIYYQAASRANGETKIDCVRVATKGAVTPKPVPEPEKQTDHTVKIAGVIAGILLFVIIFLGVVLVMKKRKLAKKRKETMSSTRQEMTVMVNSMDKSYAEQGTNCDEAFSFMGTHNLNGRSVSSPSSFTMKTNTLSTSVPNSYYPDETHTMASDTSSLAQPHTYKKREAADVPYQTGQLHPAIRVADLLQHITQMKCAEGYGFKEEYESFFEGQSAPWDSAKKDENRMKNRYGNIIAYDHSRVRLQMLEGDNNSDYINGNYIDGYHRPNHYIATQGPMQETIYDFWRMVWHENTASIIMVTNLVEVGRVKCCKYWPDDTEIYKDIKVTLIDTELLAEYVIRTFAVEKRGIHEIREIRQFHFTGWPDHGVPYHATGLLGFVRQVKSKSPPNAGPLVVHCSAGAGRTGCFIVIDIMLDMAEREGVVDIYNCVRELRSRRVNMVQTEEQYVFIHDAILEACLCGDTSIPASQVRSLYYDMNKLDPQTNSSQIKEEFRTLNMVTPTLRVEDCSIALLPRNHEKNRCMDILPPDRCLPFLITIDGESSNYINAALMDSYKQPSAFIVTQHPLPNTVKDFWRLVLDYHCTSVVMLNDVDPAQLCPQYWPENGVHRHGPIQVEFVSADLEEDIISRIFRIYNASRPQDGHRMVQQFQFLGWPMYRDTPVSKRSFLKLIRQVDKWQEEYNGGEGRTVVHCLNGGGRSGTFCAISIVCEMLRHQRTVDVFHAVKTLRNNKPNMVDLLDQYKFCYEVALEYLNSG.

The first 20 residues, 1 to 20 (MRTLGTCLVTLAGLLLTAAG), serve as a signal peptide directing secretion. The Extracellular segment spans residues 21 to 742 (ETFSGGCLFD…PEKQTDHTVK (722 aa)). The MAM domain occupies 22–184 (TFSGGCLFDE…VKVLGHPCTR (163 aa)). An intrachain disulfide couples cysteine 27 to cysteine 36. 4 N-linked (GlcNAc...) asparagine glycosylation sites follow: asparagine 72, asparagine 92, asparagine 131, and asparagine 249. Cystine bridges form between cysteine 96–cysteine 182 and cysteine 206–cysteine 260. The Ig-like C2-type domain maps to 186 to 277 (PHFLRIQNVE…VGISNYAELV (92 aa)). Fibronectin type-III domains are found at residues 284–379 (PIAP…CADP), 382–480 (GPRK…TDED), 481–587 (LPGA…SAPS), and 589–671 (PAYE…DSLQ). Residues asparagine 406, asparagine 414, asparagine 454, asparagine 534, asparagine 544, asparagine 598, asparagine 651, and asparagine 681 are each glycosylated (N-linked (GlcNAc...) asparagine). Residues 743–764 (IAGVIAGILLFVIIFLGVVLVM) form a helical membrane-spanning segment. At 765-1452 (KKRKLAKKRK…EVALEYLNSG (688 aa)) the chain is on the cytoplasmic side. Serine 821 is modified (phosphoserine). 2 consecutive Tyrosine-protein phosphatase domains span residues 900–1154 (FKEE…ILEA) and 1186–1448 (IKEE…ALEY). Substrate-binding positions include aspartate 1063, 1095-1101 (CSAGAGR), and glutamine 1139. Cysteine 1095 serves as the catalytic Phosphocysteine intermediate. The active-site Phosphocysteine intermediate is cysteine 1389.

This sequence belongs to the protein-tyrosine phosphatase family. Receptor class 2B subfamily. In terms of assembly, homodimer. As to expression, most abundant in lung, less in brain and heart.

Its subcellular location is the cell membrane. It catalyses the reaction O-phospho-L-tyrosyl-[protein] + H2O = L-tyrosyl-[protein] + phosphate. Functionally, receptor protein-tyrosine phosphatase that mediates homotypic cell-cell interactions and plays a role in adipogenic differentiation via modulation of p120 catenin/CTNND1 phosphorylation. Promotes CTNND1 dephosphorylation and prevents its cytoplasmic localization where it inhibits SLC2A4 membrane trafficking. In turn, SLC2A4 is directed to the plasma membrane and performs its glucose transporter function. This chain is Receptor-type tyrosine-protein phosphatase mu (Ptprm), found in Mus musculus (Mouse).